The following is a 134-amino-acid chain: Small ribosomal subunit protein uS8c (134 aa).

The protein belongs to the universal ribosomal protein uS8 family. As to quaternary structure, part of the 30S ribosomal subunit.

It is found in the plastid. Its subcellular location is the chloroplast. In terms of biological role, one of the primary rRNA binding proteins, it binds directly to 16S rRNA central domain where it helps coordinate assembly of the platform of the 30S subunit. The polypeptide is Small ribosomal subunit protein uS8c (rps8) (Capsella bursa-pastoris (Shepherd's purse)).